A 194-amino-acid chain; its full sequence is 5'-deoxynucleotidase VP0926 (194 aa).

Substrate is bound by residues 18–19 and H33; that span reads RW. Residues 30–142 enclose the HD domain; sequence VSEHSLQVAF…VKQADSICAY (113 aa). A divalent metal cation contacts are provided by H33, H68, and D69. Residues D69, 77 to 80, and D137 contribute to the substrate site; that span reads DLPT. D137 is an a divalent metal cation binding site.

The protein belongs to the 5DNU family. As to quaternary structure, homodimer. Requires a divalent metal cation as cofactor.

The protein localises to the cytoplasm. The catalysed reaction is a 2'-deoxyribonucleoside 5'-phosphate + H2O = a 2'-deoxyribonucleoside + phosphate. In terms of biological role, catalyzes the strictly specific dephosphorylation of 2'-deoxyribonucleoside 5'-monophosphates. This Vibrio parahaemolyticus serotype O3:K6 (strain RIMD 2210633) protein is 5'-deoxynucleotidase VP0926.